The following is an 878-amino-acid chain: DNA mismatch repair protein MutS (878 aa).

629 to 636 is an ATP binding site; that stretch reads GPNMAGKS.

It belongs to the DNA mismatch repair MutS family.

In terms of biological role, this protein is involved in the repair of mismatches in DNA. It is possible that it carries out the mismatch recognition step. This protein has a weak ATPase activity. This is DNA mismatch repair protein MutS from Roseobacter denitrificans (strain ATCC 33942 / OCh 114) (Erythrobacter sp. (strain OCh 114)).